The chain runs to 193 residues: CASP-like protein 1D1 (193 aa).

Residues 1-24 (MGYETKSTLDTERSTAPGTGTTTK) are disordered. Residues 1-30 (MGYETKSTLDTERSTAPGTGTTTKSCSMTQ) lie on the Cytoplasmic side of the membrane. The span at 14–24 (STAPGTGTTTK) shows a compositional bias: polar residues. Residues 31 to 51 (VVLRFVLFAATLTSIVVMVTS) traverse the membrane as a helical segment. Residues 52–76 (KQTKNIFLPGTPIRIPAAEFTNSPA) lie on the Extracellular side of the membrane. The chain crosses the membrane as a helical span at residues 77-97 (LIYFVVALSVACFYSIVSTFV). Over 98–108 (TVSAFKKHSCS) the chain is Cytoplasmic. Residues 109 to 129 (AVLLLNLAIMDAVMVGIVASA) form a helical membrane-spanning segment. Residues 130 to 162 (TGAGGGVAYLGLKGNKEVRWGKICHIYDKFCRH) are Extracellular-facing. Residues 163–183 (VGGAIAVSLFASVVLLLLSII) form a helical membrane-spanning segment. Over 184-193 (SVLSLYKKIR) the chain is Cytoplasmic.

This sequence belongs to the Casparian strip membrane proteins (CASP) family. In terms of assembly, homodimer and heterodimers.

It localises to the cell membrane. The polypeptide is CASP-like protein 1D1 (Arabidopsis thaliana (Mouse-ear cress)).